A 141-amino-acid chain; its full sequence is Large ribosomal subunit protein uL11 (141 aa).

Belongs to the universal ribosomal protein uL11 family. In terms of assembly, part of the ribosomal stalk of the 50S ribosomal subunit. Interacts with L10 and the large rRNA to form the base of the stalk. L10 forms an elongated spine to which L12 dimers bind in a sequential fashion forming a multimeric L10(L12)X complex. Post-translationally, one or more lysine residues are methylated.

Functionally, forms part of the ribosomal stalk which helps the ribosome interact with GTP-bound translation factors. In Chlamydia muridarum (strain MoPn / Nigg), this protein is Large ribosomal subunit protein uL11.